The following is a 75-amino-acid chain: U6-lycotoxin-Ls1a (75 aa).

Positions 1–21 (MKLLLFTALVLVVISLIEVEA) are cleaved as a signal peptide. Residues 22 to 25 (ENER) constitute a propeptide that is removed on maturation.

It belongs to the neurotoxin 19 (CSTX) family. 06 (U6-Lctx) subfamily. Post-translationally, contains 4 disulfide bonds. Expressed by the venom gland.

The protein localises to the secreted. The chain is U6-lycotoxin-Ls1a from Lycosa singoriensis (Wolf spider).